We begin with the raw amino-acid sequence, 353 residues long: Farnesyl pyrophosphate synthase (353 aa).

Isopentenyl diphosphate contacts are provided by K57, R60, and Q96. At K57 the chain carries N6-(2-hydroxyisobutyryl)lysine; alternate. K57 is modified (N6-acetyllysine; alternate). Residues D103 and D107 each coordinate Mg(2+). Dimethylallyl diphosphate is bound at residue R112. Isopentenyl diphosphate is bound at residue R113. Dimethylallyl diphosphate contacts are provided by K200, T201, Q240, K257, and K266.

Belongs to the FPP/GGPP synthase family. Homodimer. Interacts with RSAD2. The cofactor is Mg(2+).

It is found in the cytoplasm. It carries out the reaction isopentenyl diphosphate + dimethylallyl diphosphate = (2E)-geranyl diphosphate + diphosphate. The enzyme catalyses isopentenyl diphosphate + (2E)-geranyl diphosphate = (2E,6E)-farnesyl diphosphate + diphosphate. The protein operates within isoprenoid biosynthesis; farnesyl diphosphate biosynthesis; farnesyl diphosphate from geranyl diphosphate and isopentenyl diphosphate: step 1/1. Its pathway is isoprenoid biosynthesis; geranyl diphosphate biosynthesis; geranyl diphosphate from dimethylallyl diphosphate and isopentenyl diphosphate: step 1/1. With respect to regulation, inactivated by interferon-induced RSAD2. This inactivation may result of disruption of lipid rafts at the plasma membrane, and thus have an antiviral effect since many enveloped viruses need lipid rafts to bud efficiently out of the cell. Key enzyme in isoprenoid biosynthesis which catalyzes the formation of farnesyl diphosphate (FPP), a precursor for several classes of essential metabolites including sterols, dolichols, carotenoids, and ubiquinones. FPP also serves as substrate for protein farnesylation and geranylgeranylation. Catalyzes the sequential condensation of isopentenyl pyrophosphate with the allylic pyrophosphates, dimethylallyl pyrophosphate, and then with the resultant geranylpyrophosphate to the ultimate product farnesyl pyrophosphate. This is Farnesyl pyrophosphate synthase (Fdps) from Mus musculus (Mouse).